The chain runs to 440 residues: Trigger factor (440 aa).

The region spanning 163–248 (GEIVSVTFEA…VHVIKERTLP (86 aa)) is the PPIase FKBP-type domain.

It belongs to the FKBP-type PPIase family. Tig subfamily.

The protein resides in the cytoplasm. The enzyme catalyses [protein]-peptidylproline (omega=180) = [protein]-peptidylproline (omega=0). In terms of biological role, involved in protein export. Acts as a chaperone by maintaining the newly synthesized protein in an open conformation. Functions as a peptidyl-prolyl cis-trans isomerase. The chain is Trigger factor from Solidesulfovibrio magneticus (strain ATCC 700980 / DSM 13731 / RS-1) (Desulfovibrio magneticus).